Here is a 506-residue protein sequence, read N- to C-terminus: Kynurenine 3-monooxygenase (506 aa).

Belongs to the aromatic-ring hydroxylase family. KMO subfamily. It depends on FAD as a cofactor.

The protein localises to the mitochondrion outer membrane. The enzyme catalyses L-kynurenine + NADPH + O2 + H(+) = 3-hydroxy-L-kynurenine + NADP(+) + H2O. Its pathway is cofactor biosynthesis; NAD(+) biosynthesis; quinolinate from L-kynurenine: step 1/3. Functionally, catalyzes the hydroxylation of L-kynurenine (L-Kyn) to form 3-hydroxy-L-kynurenine (L-3OHKyn). Required for synthesis of quinolinic acid. The polypeptide is Kynurenine 3-monooxygenase (bna4) (Emericella nidulans (strain FGSC A4 / ATCC 38163 / CBS 112.46 / NRRL 194 / M139) (Aspergillus nidulans)).